We begin with the raw amino-acid sequence, 221 residues long: Protein-L-isoaspartate O-methyltransferase (221 aa).

The active site involves Ser-64.

It belongs to the methyltransferase superfamily. L-isoaspartyl/D-aspartyl protein methyltransferase family.

Its subcellular location is the cytoplasm. It catalyses the reaction [protein]-L-isoaspartate + S-adenosyl-L-methionine = [protein]-L-isoaspartate alpha-methyl ester + S-adenosyl-L-homocysteine. In terms of biological role, catalyzes the methyl esterification of L-isoaspartyl residues in peptides and proteins that result from spontaneous decomposition of normal L-aspartyl and L-asparaginyl residues. It plays a role in the repair and/or degradation of damaged proteins. This Thermococcus sibiricus (strain DSM 12597 / MM 739) protein is Protein-L-isoaspartate O-methyltransferase.